A 60-amino-acid chain; its full sequence is MAVPKKKTSKSRRDMRRSHHALKGSAYGECPNCGELKRPHHVCGSCGHYDGREVVQNASA.

Basic residues predominate over residues 1 to 22; sequence MAVPKKKTSKSRRDMRRSHHAL. The interval 1–27 is disordered; that stretch reads MAVPKKKTSKSRRDMRRSHHALKGSAY.

This sequence belongs to the bacterial ribosomal protein bL32 family.

The protein is Large ribosomal subunit protein bL32 of Rhodospirillum centenum (strain ATCC 51521 / SW).